A 248-amino-acid chain; its full sequence is Lysine-rich arabinogalactan protein 19 (248 aa).

The first 24 residues, 1 to 24 (MESNSIIWSLLLASALISSFSVNA), serve as a signal peptide directing secretion. The segment covering 25–37 (QGPAASPVTSTTT) has biased composition (low complexity). Residues 25–221 (QGPAASPVTS…APSPNTNGGN (197 aa)) are disordered. Pro residues-rich tracts occupy residues 38–57 (APPPTTAAPPTTAAPPPTTT), 67–86 (PASPVTPPPAVTPTSPPAPK), and 94–171 (ATPP…PAPA). A compositionally biased stretch (basic residues) spans 173–187 (TKHKRKHKHKRHHHA). Pro residues predominate over residues 189 to 203 (APAPIPPSPPSPPVL). Ser196 is lipidated: GPI-anchor amidated serine. The propeptide at 197 to 248 (PPSPPVLTDPQDTAPAPSPNTNGGNALNQLKGRAVMWLNTGLVILFLLAMTA) is removed in mature form.

It belongs to the lysine-rich AGP family. In terms of processing, O-glycosylated on the hydroxyproline residues. As to expression, strongly expressed in stems, moderately expressed in flowers and roots and weakly expressed in young leaves.

The protein resides in the cell membrane. Its function is as follows. Proteoglycan that seems to be implicated in diverse developmental roles such as differentiation, cell-cell recognition, embryogenesis and programmed cell death. In Arabidopsis thaliana (Mouse-ear cress), this protein is Lysine-rich arabinogalactan protein 19 (AGP19).